Consider the following 281-residue polypeptide: Undecaprenyl-diphosphatase (281 aa).

8 consecutive transmembrane segments (helical) span residues 1–21 (MNVL…FLPI), 45–65 (WTAF…IYFA), 93–113 (SKLG…GLVF), 125–145 (LIVI…SEVV), 155–175 (ISWL…VPGA), 195–215 (AARF…LLEF), 227–247 (FLVL…TIAF), and 256–276 (STNV…WMVF).

This sequence belongs to the UppP family.

It is found in the cell inner membrane. It carries out the reaction di-trans,octa-cis-undecaprenyl diphosphate + H2O = di-trans,octa-cis-undecaprenyl phosphate + phosphate + H(+). Functionally, catalyzes the dephosphorylation of undecaprenyl diphosphate (UPP). Confers resistance to bacitracin. This chain is Undecaprenyl-diphosphatase, found in Syntrophobacter fumaroxidans (strain DSM 10017 / MPOB).